A 357-amino-acid polypeptide reads, in one-letter code: Elongation factor Ts (357 aa).

The interval 82–85 (TDFV) is involved in Mg(2+) ion dislocation from EF-Tu.

This sequence belongs to the EF-Ts family.

Its subcellular location is the cytoplasm. Its function is as follows. Associates with the EF-Tu.GDP complex and induces the exchange of GDP to GTP. It remains bound to the aminoacyl-tRNA.EF-Tu.GTP complex up to the GTP hydrolysis stage on the ribosome. In Campylobacter jejuni subsp. jejuni serotype O:2 (strain ATCC 700819 / NCTC 11168), this protein is Elongation factor Ts.